Consider the following 236-residue polypeptide: Aminopyrimidine aminohydrolase (236 aa).

Asp44 serves as a coordination point for substrate. Cys135 (nucleophile) is an active-site residue. The substrate site is built by Tyr139 and Tyr163. Glu205 serves as the catalytic Proton donor.

Belongs to the TenA family. As to quaternary structure, homotetramer.

The catalysed reaction is 4-amino-5-aminomethyl-2-methylpyrimidine + H2O = 4-amino-5-hydroxymethyl-2-methylpyrimidine + NH4(+). It catalyses the reaction thiamine + H2O = 5-(2-hydroxyethyl)-4-methylthiazole + 4-amino-5-hydroxymethyl-2-methylpyrimidine + H(+). It participates in cofactor biosynthesis; thiamine diphosphate biosynthesis. Its function is as follows. Catalyzes an amino-pyrimidine hydrolysis reaction at the C5' of the pyrimidine moiety of thiamine compounds, a reaction that is part of a thiamine salvage pathway. Thus, catalyzes the conversion of 4-amino-5-aminomethyl-2-methylpyrimidine to 4-amino-5-hydroxymethyl-2-methylpyrimidine (HMP). To a lesser extent, is also able to catalyze the hydrolytic cleavage of thiamine; however, this thiaminase activity is unlikely to be physiologically relevant. Therefore, is involved in the regeneration of the thiamine pyrimidine from thiamine degraded products present in the environment, rather than in thiamine degradation. This is Aminopyrimidine aminohydrolase from Bacillus subtilis (strain 168).